We begin with the raw amino-acid sequence, 239 residues long: Lipoprotein-releasing system ATP-binding protein LolD (239 aa).

The region spanning 14–239 (IRAERLGKTY…KLRELAPSAV (226 aa)) is the ABC transporter domain. Residue 50-57 (GASGAGKS) coordinates ATP.

It belongs to the ABC transporter superfamily. Lipoprotein translocase (TC 3.A.1.125) family. The complex is composed of two ATP-binding proteins (LolD) and two transmembrane proteins (LolC and LolE).

The protein localises to the cell inner membrane. In terms of biological role, part of the ABC transporter complex LolCDE involved in the translocation of mature outer membrane-directed lipoproteins, from the inner membrane to the periplasmic chaperone, LolA. Responsible for the formation of the LolA-lipoprotein complex in an ATP-dependent manner. This Xanthomonas campestris pv. campestris (strain 8004) protein is Lipoprotein-releasing system ATP-binding protein LolD.